A 309-amino-acid polypeptide reads, in one-letter code: uncharacterized protein (309 aa).

It belongs to the anthranilate phosphoribosyltransferase family.

This is an uncharacterized protein from Aquifex aeolicus (strain VF5).